The following is a 103-amino-acid chain: Small ribosomal subunit protein uS10 (103 aa).

Belongs to the universal ribosomal protein uS10 family. Part of the 30S ribosomal subunit.

In terms of biological role, involved in the binding of tRNA to the ribosomes. This Shewanella pealeana (strain ATCC 700345 / ANG-SQ1) protein is Small ribosomal subunit protein uS10.